Here is a 363-residue protein sequence, read N- to C-terminus: Phosphoserine aminotransferase (363 aa).

L-glutamate is bound at residue R46. Pyridoxal 5'-phosphate contacts are provided by residues 80–81, W106, T156, D176, and Q199; that span reads AT. K200 carries the post-translational modification N6-(pyridoxal phosphate)lysine. 241–242 is a binding site for pyridoxal 5'-phosphate; that stretch reads NT.

It belongs to the class-V pyridoxal-phosphate-dependent aminotransferase family. SerC subfamily. As to quaternary structure, homodimer. Pyridoxal 5'-phosphate serves as cofactor.

The protein localises to the cytoplasm. It carries out the reaction O-phospho-L-serine + 2-oxoglutarate = 3-phosphooxypyruvate + L-glutamate. The enzyme catalyses 4-(phosphooxy)-L-threonine + 2-oxoglutarate = (R)-3-hydroxy-2-oxo-4-phosphooxybutanoate + L-glutamate. Its pathway is amino-acid biosynthesis; L-serine biosynthesis; L-serine from 3-phospho-D-glycerate: step 2/3. The protein operates within cofactor biosynthesis; pyridoxine 5'-phosphate biosynthesis; pyridoxine 5'-phosphate from D-erythrose 4-phosphate: step 3/5. Its function is as follows. Catalyzes the reversible conversion of 3-phosphohydroxypyruvate to phosphoserine and of 3-hydroxy-2-oxo-4-phosphonooxybutanoate to phosphohydroxythreonine. The polypeptide is Phosphoserine aminotransferase (Leptospira interrogans serogroup Icterohaemorrhagiae serovar copenhageni (strain Fiocruz L1-130)).